The following is a 366-amino-acid chain: Cobalt-precorrin-5B C(1)-methyltransferase (366 aa).

This sequence belongs to the CbiD family.

The enzyme catalyses Co-precorrin-5B + S-adenosyl-L-methionine = Co-precorrin-6A + S-adenosyl-L-homocysteine. The protein operates within cofactor biosynthesis; adenosylcobalamin biosynthesis; cob(II)yrinate a,c-diamide from sirohydrochlorin (anaerobic route): step 6/10. Functionally, catalyzes the methylation of C-1 in cobalt-precorrin-5B to form cobalt-precorrin-6A. This Paraburkholderia phymatum (strain DSM 17167 / CIP 108236 / LMG 21445 / STM815) (Burkholderia phymatum) protein is Cobalt-precorrin-5B C(1)-methyltransferase.